The sequence spans 136 residues: DNA-directed RNA polymerase subunit omega (136 aa).

Belongs to the RNA polymerase subunit omega family. The RNAP catalytic core consists of 2 alpha, 1 beta, 1 beta' and 1 omega subunit. When a sigma factor is associated with the core the holoenzyme is formed, which can initiate transcription.

The enzyme catalyses RNA(n) + a ribonucleoside 5'-triphosphate = RNA(n+1) + diphosphate. Promotes RNA polymerase assembly. Latches the N- and C-terminal regions of the beta' subunit thereby facilitating its interaction with the beta and alpha subunits. The protein is DNA-directed RNA polymerase subunit omega of Acidiphilium cryptum (strain JF-5).